Reading from the N-terminus, the 367-residue chain is Glutamate 5-kinase (367 aa).

Lysine 17 serves as a coordination point for ATP. Serine 57, aspartate 144, and asparagine 156 together coordinate substrate. Residues serine 176–aspartate 177 and threonine 217–lysine 223 each bind ATP. A PUA domain is found at alanine 279–proline 357.

It belongs to the glutamate 5-kinase family.

The protein resides in the cytoplasm. The enzyme catalyses L-glutamate + ATP = L-glutamyl 5-phosphate + ADP. It functions in the pathway amino-acid biosynthesis; L-proline biosynthesis; L-glutamate 5-semialdehyde from L-glutamate: step 1/2. Functionally, catalyzes the transfer of a phosphate group to glutamate to form L-glutamate 5-phosphate. This is Glutamate 5-kinase from Mycolicibacterium paratuberculosis (strain ATCC BAA-968 / K-10) (Mycobacterium paratuberculosis).